Reading from the N-terminus, the 334-residue chain is Glycerol-3-phosphate dehydrogenase [NAD(P)+] (334 aa).

4 residues coordinate NADPH: serine 14, tyrosine 15, histidine 35, and lysine 109. Residues lysine 109, glycine 138, and threonine 140 each coordinate sn-glycerol 3-phosphate. Residue alanine 142 participates in NADPH binding. Sn-glycerol 3-phosphate is bound by residues lysine 194, aspartate 247, serine 257, arginine 258, and asparagine 259. Residue lysine 194 is the Proton acceptor of the active site. Arginine 258 serves as a coordination point for NADPH. 2 residues coordinate NADPH: valine 282 and glutamate 284.

The protein belongs to the NAD-dependent glycerol-3-phosphate dehydrogenase family.

Its subcellular location is the cytoplasm. The enzyme catalyses sn-glycerol 3-phosphate + NAD(+) = dihydroxyacetone phosphate + NADH + H(+). It catalyses the reaction sn-glycerol 3-phosphate + NADP(+) = dihydroxyacetone phosphate + NADPH + H(+). Its pathway is membrane lipid metabolism; glycerophospholipid metabolism. Its function is as follows. Catalyzes the reduction of the glycolytic intermediate dihydroxyacetone phosphate (DHAP) to sn-glycerol 3-phosphate (G3P), the key precursor for phospholipid synthesis. The protein is Glycerol-3-phosphate dehydrogenase [NAD(P)+] of Aeromonas salmonicida (strain A449).